The following is a 260-amino-acid chain: uncharacterized protein (260 aa).

Residues 1–22 (MGYIKRIGLYISIFILIVMVAG) form the signal peptide. Cysteine 23 carries the N-palmitoyl cysteine lipid modification. The S-diacylglycerol cysteine moiety is linked to residue cysteine 23.

The protein belongs to the staphylococcal tandem lipoprotein family.

The protein resides in the cell membrane. This is an uncharacterized protein from Staphylococcus aureus (strain bovine RF122 / ET3-1).